Reading from the N-terminus, the 196-residue chain is MFLDLHPYTILVSIFIILLVKQIVGRIGKSTIQEFVWLLYLKISPNQAIKDYNTKKVELHEINKQKRSISAQDEYAKWTKLNRQADKLTSEIQKLNEEIRQSKASIDKLANVLLMVLTTLPIWVARIFFRKTHLFYLRSGIFPRYIEWVLALPFFPSGAVGLTVWMFAANSVIHNVISLVSFAFEKRVEKPVRQKK.

Topologically, residues 1-10 (MFLDLHPYTI) are lumenal. The helical transmembrane segment at 11-30 (LVSIFIILLVKQIVGRIGKS) threads the bilayer. Residues 31 to 114 (TIQEFVWLLY…SIDKLANVLL (84 aa)) lie on the Cytoplasmic side of the membrane. A coiled-coil region spans residues 76–114 (AKWTKLNRQADKLTSEIQKLNEEIRQSKASIDKLANVLL). A helical transmembrane segment spans residues 115-135 (MVLTTLPIWVARIFFRKTHLF). Residues 136-159 (YLRSGIFPRYIEWVLALPFFPSGA) lie on the Lumenal side of the membrane. A helical transmembrane segment spans residues 160–176 (VGLTVWMFAANSVIHNV). Residues 177 to 196 (ISLVSFAFEKRVEKPVRQKK) lie on the Cytoplasmic side of the membrane.

This sequence belongs to the WRB/GET1 family. In terms of assembly, component of the Golgi to ER traffic (GET) complex, which is composed of GET1, GET2 and GET3. Within the complex, GET1 and GET2 form a heterotetramer which is stabilized by phosphatidylinositol binding and which binds to the GET3 homodimer.

The protein localises to the endoplasmic reticulum membrane. Its subcellular location is the golgi apparatus membrane. Its function is as follows. Required for the post-translational delivery of tail-anchored (TA) proteins to the endoplasmic reticulum. Together with GET2, acts as a membrane receptor for soluble GET3, which recognizes and selectively binds the transmembrane domain of TA proteins in the cytosol. The GET complex cooperates with the HDEL receptor ERD2 to mediate the ATP-dependent retrieval of resident ER proteins that contain a C-terminal H-D-E-L retention signal from the Golgi to the ER. The sequence is that of Golgi to ER traffic protein 1 from Candida tropicalis (strain ATCC MYA-3404 / T1) (Yeast).